The sequence spans 378 residues: Dihydroorotate dehydrogenase (quinone) (378 aa).

FMN contacts are provided by residues 77-81 (AGFDK) and T101. K81 serves as a coordination point for substrate. 126 to 130 (NRMGF) serves as a coordination point for substrate. Residues N158 and N191 each coordinate FMN. Position 191 (N191) interacts with substrate. The active-site Nucleophile is the S194. N196 contacts substrate. The FMN site is built by K229 and T257. 258-259 (NT) provides a ligand contact to substrate. Residues G287, G316, and 337-338 (YT) each bind FMN.

Belongs to the dihydroorotate dehydrogenase family. Type 2 subfamily. In terms of assembly, monomer. It depends on FMN as a cofactor.

Its subcellular location is the cell membrane. It carries out the reaction (S)-dihydroorotate + a quinone = orotate + a quinol. It participates in pyrimidine metabolism; UMP biosynthesis via de novo pathway; orotate from (S)-dihydroorotate (quinone route): step 1/1. Catalyzes the conversion of dihydroorotate to orotate with quinone as electron acceptor. The sequence is that of Dihydroorotate dehydrogenase (quinone) from Synechococcus sp. (strain ATCC 27144 / PCC 6301 / SAUG 1402/1) (Anacystis nidulans).